A 405-amino-acid polypeptide reads, in one-letter code: uncharacterized protein (405 aa).

The next 13 helical transmembrane spans lie at 19 to 39 (IVSI…PLAV), 48 to 68 (MGFS…ATLL), 85 to 105 (IVVF…LADI), 106 to 126 (ASAW…ILGI), 129 to 149 (SFAG…LHIG), 156 to 176 (GIVT…CYAW), 178 to 198 (GLQG…LLAL), 224 to 244 (GMAL…ITLF), 252 to 272 (GAAF…LLFP), 283 to 303 (VAMI…TAAM), 309 to 329 (IGVL…GVVA), 344 to 364 (TYTV…GLVM), and 366 to 386 (WAGV…ALLL).

It belongs to the major facilitator superfamily. YhhS family.

It is found in the cell inner membrane. This is an uncharacterized protein from Salmonella paratyphi C (strain RKS4594).